An 86-amino-acid polypeptide reads, in one-letter code: ATP synthase subunit c (86 aa).

A run of 2 helical transmembrane segments spans residues 13–33 and 63–83; these read FFAT…AGLA and ILGQ…AFIL.

Belongs to the ATPase C chain family. F-type ATPases have 2 components, F(1) - the catalytic core - and F(0) - the membrane proton channel. F(1) has five subunits: alpha(3), beta(3), gamma(1), delta(1), epsilon(1). F(0) has three main subunits: a(1), b(2) and c(10-14). The alpha and beta chains form an alternating ring which encloses part of the gamma chain. F(1) is attached to F(0) by a central stalk formed by the gamma and epsilon chains, while a peripheral stalk is formed by the delta and b chains.

It is found in the cell membrane. In terms of biological role, f(1)F(0) ATP synthase produces ATP from ADP in the presence of a proton or sodium gradient. F-type ATPases consist of two structural domains, F(1) containing the extramembraneous catalytic core and F(0) containing the membrane proton channel, linked together by a central stalk and a peripheral stalk. During catalysis, ATP synthesis in the catalytic domain of F(1) is coupled via a rotary mechanism of the central stalk subunits to proton translocation. Functionally, key component of the F(0) channel; it plays a direct role in translocation across the membrane. A homomeric c-ring of between 10-14 subunits forms the central stalk rotor element with the F(1) delta and epsilon subunits. The sequence is that of ATP synthase subunit c from Acholeplasma laidlawii (strain PG-8A).